We begin with the raw amino-acid sequence, 366 residues long: Flagellar P-ring protein (366 aa).

Positions 1–22 (MFTRKSVILMAVLLIWSAVSYA) are cleaved as a signal peptide.

Belongs to the FlgI family. The basal body constitutes a major portion of the flagellar organelle and consists of four rings (L,P,S, and M) mounted on a central rod.

It localises to the periplasm. The protein localises to the bacterial flagellum basal body. Its function is as follows. Assembles around the rod to form the L-ring and probably protects the motor/basal body from shearing forces during rotation. The chain is Flagellar P-ring protein from Hydrogenovibrio crunogenus (strain DSM 25203 / XCL-2) (Thiomicrospira crunogena).